A 313-amino-acid polypeptide reads, in one-letter code: Dehydrogenase/reductase SDR family member 1 (313 aa).

I19 contributes to the NAD(+) binding site. R21 carries the post-translational modification Omega-N-methylarginine. D64 provides a ligand contact to NAD(+). Residue S151 coordinates substrate. NAD(+) contacts are provided by Y163, K167, and T198. The active-site Proton acceptor is Y163.

This sequence belongs to the short-chain dehydrogenases/reductases (SDR) family.

It localises to the endoplasmic reticulum. It catalyses the reaction 17alpha-estradiol + NADP(+) = estrone + NADPH + H(+). The catalysed reaction is testosterone + NADP(+) = androst-4-ene-3,17-dione + NADPH + H(+). The enzyme catalyses prostaglandin E1 + NADPH + H(+) = prostaglandin F1 + NADP(+). It carries out the reaction isatin + NADPH + H(+) = 3-hydroxyindolin-2-one + NADP(+). In terms of biological role, NADPH-dependent oxidoreductase which catalyzes the reduction of some steroids (estrone, androstene-3,17-dione and cortisone) as well as prostaglandin E1, isatin and xenobiotics in vitro. May have a role in steroid and/or xenobiotic metabolism. The polypeptide is Dehydrogenase/reductase SDR family member 1 (Mus musculus (Mouse)).